A 575-amino-acid chain; its full sequence is Triokinase/FMN cyclase (575 aa).

Positions 9 to 336 constitute a DhaK domain; sequence SVAGCADDAL…IDAETTAAAW (328 aa). Residues 56 to 59, lysine 109, and aspartate 114 contribute to the dihydroxyacetone site; that span reads GSGH. Histidine 221 serves as the catalytic Tele-hemiaminal-histidine intermediate. The tract at residues 348 to 367 is disordered; the sequence is KRSRVAPAEPQEAPDSTAAG. At serine 350 the chain carries Phosphoserine. Residues 372-571 form the DhaL domain; the sequence is KRMALVLERV…AAAILRAILE (200 aa). Residues 401–404, 446–447, glycine 486, and 494–495 each bind ATP; these read DGDC, SS, and TM. Serine 511 and serine 545 each carry phosphoserine. Residue 556 to 558 participates in ATP binding; sequence DPG.

The protein belongs to the dihydroxyacetone kinase (DAK) family. As to quaternary structure, homodimer. Interacts with IFIH1 (via the CARD domains), the interaction is inhibited by viral infection. It depends on Mg(2+) as a cofactor. Mn(2+) serves as cofactor. Co(2+) is required as a cofactor. Detected in erythrocytes (at protein level).

The enzyme catalyses dihydroxyacetone + ATP = dihydroxyacetone phosphate + ADP + H(+). The catalysed reaction is D-glyceraldehyde + ATP = D-glyceraldehyde 3-phosphate + ADP + H(+). It carries out the reaction FAD = riboflavin cyclic-4',5'-phosphate + AMP + H(+). Its activity is regulated as follows. Each activity is inhibited by the substrate(s) of the other. Its function is as follows. Catalyzes both the phosphorylation of dihydroxyacetone and of glyceraldehyde, and the splitting of ribonucleoside diphosphate-X compounds among which FAD is the best substrate. Represses IFIH1-mediated cellular antiviral response. This chain is Triokinase/FMN cyclase, found in Homo sapiens (Human).